A 500-amino-acid polypeptide reads, in one-letter code: Sodium/potassium/calcium exchanger 5 (500 aa).

The N-terminal stretch at 1-29 (MQTKGGQTWARRALLLGILWATAHLPLSG) is a signal peptide. Residues 30–66 (TSLPQRLPRATGNSTQCVISPSSEFPEGFFTRQERRD) are Extracellular-facing. The chain crosses the membrane as a helical span at residues 67 to 87 (GGIIIYFLIIVYMFMAISIVC). At 88-111 (DEYFLPSLEIISESLGLSQDVAGT) the chain is on the cytoplasmic side. A helical transmembrane segment spans residues 112-132 (TFMAAGSSAPELVTAFLGVFI). Over 133–136 (TKGD) the chain is Extracellular. A helical membrane pass occupies residues 137–157 (IGISTILGSAIYNLLGICAAC). Over 158–169 (GLLSNTVSTLSC) the chain is Cytoplasmic. The chain crosses the membrane as a helical span at residues 170 to 190 (WPLFRDCAAYTISAAAVLGII). Residues 191–195 (YDNQV) lie on the Extracellular side of the membrane. Residues 196 to 216 (YWYEGALLLLIYGLYVLVLCF) form a helical membrane-spanning segment. At 217–302 (DIKINQYIIK…PSVFNMPEAD (86 aa)) the chain is on the cytoplasmic side. Residues 303 to 323 (LKRIFWVLSLPIITLLFLTTP) traverse the membrane as a helical segment. The Extracellular segment spans residues 324–333 (DCRKKFWKNY). A helical transmembrane segment spans residues 334 to 354 (FVITFFMSAIWISAFTYILVW). Residues 355–368 (MVTITGETLEIPDT) are Cytoplasmic-facing. Residues 369-389 (VMGLTLLAAGTSIPDTIASVL) traverse the membrane as a helical segment. At 390–399 (VARKGKGDMA) the chain is on the extracellular side. Residues 400–420 (MSNIVGSNVFDMLCLGIPWFI) traverse the membrane as a helical segment. Residues 421–437 (KTAFINGSAPAEVNSRG) are Cytoplasmic-facing. A helical transmembrane segment spans residues 438–458 (LTYITISLNISIIFLFLAVHF). Over 459–468 (NGWKLDRKLG) the chain is Extracellular. A helical membrane pass occupies residues 469-489 (IVCLLSYLGLATLSVLYELGI). Topologically, residues 490-500 (IGNNKIRGCGG) are cytoplasmic.

The protein belongs to the Ca(2+):cation antiporter (CaCA) (TC 2.A.19) family. SLC24A subfamily.

The protein localises to the golgi apparatus. The protein resides in the trans-Golgi network membrane. It localises to the melanosome. It catalyses the reaction Ca(2+)(out) + K(+)(out) + 4 Na(+)(in) = Ca(2+)(in) + K(+)(in) + 4 Na(+)(out). Its function is as follows. Calcium, potassium:sodium antiporter that transports 1 Ca(2+) and 1 K(+) to the melanosome in exchange for 4 cytoplasmic Na(+). Involved in pigmentation, possibly by participating in ion transport in melanosomes. Predominant sodium-calcium exchanger in melanocytes. This Homo sapiens (Human) protein is Sodium/potassium/calcium exchanger 5.